Here is an 82-residue protein sequence, read N- to C-terminus: Sulfur carrier protein TusA (82 aa).

The Cysteine persulfide intermediate role is filled by Cys-19.

The protein belongs to the sulfur carrier protein TusA family.

It is found in the cytoplasm. Functionally, sulfur carrier protein which probably makes part of a sulfur-relay system. In Vibrio campbellii (strain ATCC BAA-1116), this protein is Sulfur carrier protein TusA.